We begin with the raw amino-acid sequence, 206 residues long: Oligoribonuclease (206 aa).

The region spanning 20 to 183 (LVWLDMEMTG…ADIHESIDEL (164 aa)) is the Exonuclease domain. Tyrosine 141 is an active-site residue.

This sequence belongs to the oligoribonuclease family.

The protein resides in the cytoplasm. In terms of biological role, 3'-to-5' exoribonuclease specific for small oligoribonucleotides. The sequence is that of Oligoribonuclease from Burkholderia lata (strain ATCC 17760 / DSM 23089 / LMG 22485 / NCIMB 9086 / R18194 / 383).